Consider the following 432-residue polypeptide: MTASYQPQLVFVDGSFAELAQDMASVLQISDEIQPLLDSEKESEALTKIVSESKKLNAIPEKEFTGAYNLLVHLVLQSKEPKKHLPTICQNLTRPVTSSPQHGAQLALFELTSIFNLLKPNDPVRFNVFIQIIRFYKIHSIPISDHLKSALKQLPRWLQSWELDEEDQRKMYSEVIEVMTAAGEEEEAYQHILKALRTFDSEDAEDYTSEEAQQLALRALRSAISSPTRLSFEDIRALPAVHALSESHPVHYQLLQIFGEQDLDDYDDFREEHEGFIEKENLDNEVLYRKMRLLTFASLAAASMQTREISYNSITKALQIPSEDVEMWAIDVIRAGLVEGKLSQKKKVFLIHSVRYRVFGEKQWRQLASSLEKTKKTVSTLLQTLRREEANAQQEAERKLVEASTQHNNDRGNQRRGGNRGQQHRERNDNDD.

Positions 184–356 (EEEEAYQHIL…KVFLIHSVRY (173 aa)) constitute a PCI domain. Composition is skewed to basic and acidic residues over residues 392–401 (AQQEAERKLV) and 423–432 (QHRERNDNDD). Positions 392 to 432 (AQQEAERKLVEASTQHNNDRGNQRRGGNRGQQHRERNDNDD) are disordered.

The protein belongs to the eIF-3 subunit M family. As to quaternary structure, component of the eukaryotic translation initiation factor 3 (eIF-3) complex.

The protein localises to the cytoplasm. Component of the eukaryotic translation initiation factor 3 (eIF-3) complex, which is involved in protein synthesis of a specialized repertoire of mRNAs and, together with other initiation factors, stimulates binding of mRNA and methionyl-tRNAi to the 40S ribosome. The eIF-3 complex specifically targets and initiates translation of a subset of mRNAs involved in cell proliferation. This is Eukaryotic translation initiation factor 3 subunit M from Pyricularia oryzae (strain 70-15 / ATCC MYA-4617 / FGSC 8958) (Rice blast fungus).